A 246-amino-acid chain; its full sequence is Deoxycytidylate 5-hydroxymethyltransferase (246 aa).

Residue cysteine 148 is part of the active site.

This sequence belongs to the thymidylate synthase family.

It catalyses the reaction dCMP + (6R)-5,10-methylene-5,6,7,8-tetrahydrofolate + H2O = 5-hydroxymethyl-dCMP + (6S)-5,6,7,8-tetrahydrofolate. The protein is Deoxycytidylate 5-hydroxymethyltransferase (42) of Enterobacteria phage T6 (Bacteriophage T6).